A 106-amino-acid chain; its full sequence is P4 prophage-derived uncharacterized protein t2655 (106 aa).

In Salmonella typhi, this protein is P4 prophage-derived uncharacterized protein t2655.